Here is a 126-residue protein sequence, read N- to C-terminus: Spermidine export protein MdtJ (126 aa).

Helical transmembrane passes span 1–21, 32–52, 55–75, and 82–102; these read MMIY…GTLS, TGHI…ALAV, VALG…ITVF, and ESLS…IMLV. The tract at residues 104 to 126 is disordered; sequence SGTRKPKKPNSPNRNSGEHHATA.

Belongs to the drug/metabolite transporter (DMT) superfamily. Small multidrug resistance (SMR) (TC 2.A.7.1) family. MdtJ subfamily. As to quaternary structure, forms a complex with MdtI.

It localises to the cell inner membrane. In terms of biological role, catalyzes the excretion of spermidine. In Yersinia enterocolitica serotype O:8 / biotype 1B (strain NCTC 13174 / 8081), this protein is Spermidine export protein MdtJ.